We begin with the raw amino-acid sequence, 435 residues long: Palmitoyltransferase pfa4 (435 aa).

Over 1–10 (MLCSSFSVSR) the chain is Cytoplasmic. Residues 11–31 (LAIPAVCILIAFLAYTSQIFF) form a helical membrane-spanning segment. Over 32 to 48 (LYFEDAPLKEDEVWRIN) the chain is Lumenal. A helical transmembrane segment spans residues 49 to 69 (ILAICIWICYYRACTVDPGHV). Residues 70–129 (PKGWMPSDRERLKADRASGRQRWCRRCEAYKPPRAHHCKTCERCVPKMDHHCPWTSNCVS) are Cytoplasmic-facing. The region spanning 91–141 (RWCRRCEAYKPPRAHHCKTCERCVPKMDHHCPWTSNCVSHFTFPHFARFLF) is the DHHC domain. Catalysis depends on Cys121, which acts as the S-palmitoyl cysteine intermediate. The helical transmembrane segment at 130–150 (HFTFPHFARFLFYAVVGIAYL) threads the bilayer. Residues 151–179 (ETRLWQRVSKVWGSRHLPSYLGPSMGQIG) are Lumenal-facing. The helical transmembrane segment at 180–200 (HLFVLFVTNSLTLFALSLLLL) threads the bilayer. The Cytoplasmic segment spans residues 201-435 (RTLWSLGSNT…QRAKRQHLSQ (235 aa)). Residues 359-368 (RKPFHVRLEE) show a composition bias toward basic and acidic residues. Residues 359–408 (RKPFHVRLEEYSNGSSDAEADTGSDDDSDHGEEGWKNSEGERLRDFGVDE) are disordered. Acidic residues predominate over residues 376 to 388 (AEADTGSDDDSDH). Basic and acidic residues predominate over residues 389–405 (GEEGWKNSEGERLRDFG).

This sequence belongs to the DHHC palmitoyltransferase family. PFA4 subfamily.

It localises to the endoplasmic reticulum membrane. It catalyses the reaction L-cysteinyl-[protein] + hexadecanoyl-CoA = S-hexadecanoyl-L-cysteinyl-[protein] + CoA. In terms of biological role, mediates the reversible addition of palmitate to target proteins, thereby regulating their membrane association and biological function. The protein is Palmitoyltransferase pfa4 of Emericella nidulans (strain FGSC A4 / ATCC 38163 / CBS 112.46 / NRRL 194 / M139) (Aspergillus nidulans).